The primary structure comprises 405 residues: Imidazolonepropionase (405 aa).

H73 and H75 together coordinate Fe(3+). Positions 73 and 75 each coordinate Zn(2+). 4-imidazolone-5-propanoate contacts are provided by R82, Y145, and H178. An N-formimidoyl-L-glutamate-binding site is contributed by Y145. H243 lines the Fe(3+) pocket. H243 is a binding site for Zn(2+). Position 246 (Q246) interacts with 4-imidazolone-5-propanoate. D318 serves as a coordination point for Fe(3+). A Zn(2+)-binding site is contributed by D318. N320 and G322 together coordinate N-formimidoyl-L-glutamate. Residue T323 participates in 4-imidazolone-5-propanoate binding.

This sequence belongs to the metallo-dependent hydrolases superfamily. HutI family. Zn(2+) serves as cofactor. Requires Fe(3+) as cofactor.

Its subcellular location is the cytoplasm. It carries out the reaction 4-imidazolone-5-propanoate + H2O = N-formimidoyl-L-glutamate. It functions in the pathway amino-acid degradation; L-histidine degradation into L-glutamate; N-formimidoyl-L-glutamate from L-histidine: step 3/3. In terms of biological role, catalyzes the hydrolytic cleavage of the carbon-nitrogen bond in imidazolone-5-propanoate to yield N-formimidoyl-L-glutamate. It is the third step in the universal histidine degradation pathway. The sequence is that of Imidazolonepropionase from Brucella abortus (strain S19).